A 465-amino-acid chain; its full sequence is FAD-dependent oxidoreductase pigF (465 aa).

An N-terminal signal peptide occupies residues 1-17; that stretch reads MMLLTLLILSSVGLAAA. Asn95, Asn138, Asn260, and Asn327 each carry an N-linked (GlcNAc...) asparagine glycan. Asp444 carries the GPI-anchor amidated aspartate lipid modification. The propeptide at 445 to 465 is removed in mature form; the sequence is SASGIWNLTNAVVLPGLLTGL. Residue Asn451 is glycosylated (N-linked (GlcNAc...) asparagine).

The protein belongs to the beta-cyclopiazonate dehydrogenase family. The cofactor is FAD.

The protein resides in the cell membrane. Its pathway is secondary metabolite biosynthesis. In terms of biological role, FAD-dependent oxidoreductase; part of the gene cluster that mediates the biosynthesis of azaphilone pigments (MonAzPs), a complex mixture of compounds with a common azaphilone skeleton very widely used as food colorants. Within the pathway, pigF desaturates C6(7) to afford the orange and red pigments from yellow pigments. The first step of the pathway is performed by the nrPKS pigA that forms the hexaketide precursor from successive condensations of five malonyl-CoA units, with a simple acetyl-CoA starter unit. The role of esterase pigG is not clear, but it may play at most a supplementary role in the formation of the benzaldehyde produced by the pigA nrPKS. This very reactive benzaldehyde is intercepted by the pigC ketoreductase that to provide the first stable enzyme-free MonAzPs intermediate, 6-(4-hydroxy-2-oxopentyl)-3-methyl-2,4-dioxocyclohexane carbaldehyde, also known as M7PKS-1. The FAD-dependent monooxygenase pigN hydroxylates M7PKS-1 at C-4, which triggers the formation of the pyran ring. PigJ, pigK and pigD are involved in the acetylation of the pyran ring. PigJ and pigK form the two subunits of a dedicated fungal FAS that produces the side chain fatty acyl moiety of MonAzPs and pigD transfers the fatty acyl chain to the C-4 alcohol. PigM and pigO are involved in the elimination of the omega-1 alcohol. PigM acts as an O-acetyltransferase that synthesizes the putative O-11 acetyl intermediate whereas pigO eliminates acetic acid to yield an intermediate with a C10(11) double bond. The dehydration of the C-11 alcohol followed by the reduction of the C6(7) double bond by the NAD(P)H-dependent oxidoreductase pigE increases the electrophilicity of the C-5 ketone of the resulting acyl benzopyran. This in turn sets up the C-5 ketone for an intramolecular Knoevenagel aldol condensation with the C-20 enol of the side chain. This condensation affords the characteristic linear tricyclic carbon skeletons of the yellow pigments that serve as the common precursors for the classical yellow pigments monascin and ankaflavin, orange pigments rubopunctatin and monascorubrin, and red pigments ribropunctamine and monascorubramine. The FAD-dependent oxidoreductase pigF is especially invoved in the biosynthesis of orange and red pigments via desaturation of C6(7). The chain is FAD-dependent oxidoreductase pigF from Monascus ruber (Mold).